Reading from the N-terminus, the 87-residue chain is Mitochondrial import protein 2 (87 aa).

Residues 1–53 (MADSEDTSVILQGIDTINSVEGLEEDGYLSDEDTSLSNELADAQRQWEESLQQ) are Cytoplasmic-facing. Residues 54–71 (LNKLLNWVLLPLLGKYIG) traverse the membrane as a helical segment. Residues 72 to 87 (RRMAKTLWSRFIEHFV) lie on the Mitochondrial intermembrane side of the membrane.

It belongs to the MIM2 family. Component of the MIM complex containing at least MIM1 and MIM2. Interacts with MIM1; interaction is direct.

It localises to the mitochondrion outer membrane. Its function is as follows. Component of the MIM complex required for outer membrane protein import. Involved in import of the subset of proteins with multiple alpha-helical transmembrane segments, including UGO1, TOM20 and FZO1. In Saccharomyces cerevisiae (strain ATCC 204508 / S288c) (Baker's yeast), this protein is Mitochondrial import protein 2.